Reading from the N-terminus, the 244-residue chain is MKLIKTKGIVLKETNFEESSKILTVLTSDFGKIQVLSKNCRRLLSVLSACSQPLMFCEFVIRKTKDIYSISSASVIESFFELSQDVNLAIYSGYLIELVDSFLEFEQKNEDVLRLLLNSLYLLKKGKDPEVVSRIFEIKILVYTGFFLQFTQCVKCQRKDITRAFFSFKDGGLTCEKCKEENDIEIEIEVVKSILVIVATNLKKLNKISLERSLNNKIKTITLPYIKMVLQKDIKILDFFRFIQ.

The protein belongs to the RecO family.

Its function is as follows. Involved in DNA repair and RecF pathway recombination. The sequence is that of DNA repair protein RecO from Caldicellulosiruptor bescii (strain ATCC BAA-1888 / DSM 6725 / KCTC 15123 / Z-1320) (Anaerocellum thermophilum).